The chain runs to 241 residues: Chloride intracellular channel protein 1 (241 aa).

Alanine 2 carries the N-acetylalanine modification. The interval alanine 2–proline 90 is required for insertion into the membrane. The residue at position 13 (lysine 13) is an N6-acetyllysine. A G-site motif is present at residues cysteine 24 to serine 27. Cysteine 24 and cysteine 59 are disulfide-bonded. The helical transmembrane segment at phenylalanine 26–valine 46 threads the bilayer. A GST C-terminal domain is found at tyrosine 93 to tyrosine 233. Lysine 119 is subject to N6-acetyllysine. A Phosphoserine modification is found at serine 121. An N6-acetyllysine modification is found at lysine 131. Phosphoserine is present on residues serine 156 and serine 211. The residue at position 233 (tyrosine 233) is a Phosphotyrosine.

It belongs to the chloride channel CLIC family. As to quaternary structure, monomer. Homodimer (in vitro). Interacts with TRAPPC2. Dimerization requires a conformation change that leads to the exposure of a large hydrophobic surface. In vivo, this may lead to membrane insertion. Expressed in neonatal and adult cardiomyocytes (at protein level).

Its subcellular location is the nucleus. It localises to the nucleus membrane. It is found in the cytoplasm. The protein resides in the cell membrane. The protein localises to the endoplasmic reticulum. The catalysed reaction is L-dehydroascorbate + 2 glutathione = glutathione disulfide + L-ascorbate. The enzyme catalyses chloride(in) = chloride(out). It carries out the reaction iodide(out) = iodide(in). It catalyses the reaction thiocyanate(in) = thiocyanate(out). The catalysed reaction is nitrate(in) = nitrate(out). The enzyme catalyses bromide(in) = bromide(out). It carries out the reaction fluoride(in) = fluoride(out). In terms of biological role, in the soluble state, catalyzes glutaredoxin-like thiol disulfide exchange reactions with reduced glutathione as electron donor. Reduces selenite and dehydroascorbate and may act as an antioxidant during oxidative stress response. Can insert into membranes and form voltage-dependent multi-ion conductive channels. Membrane insertion seems to be redox-regulated and may occur only under oxidizing conditions. Involved in regulation of the cell cycle. In Rattus norvegicus (Rat), this protein is Chloride intracellular channel protein 1.